A 133-amino-acid chain; its full sequence is Small ribosomal subunit protein bS6 (133 aa).

It belongs to the bacterial ribosomal protein bS6 family.

Functionally, binds together with bS18 to 16S ribosomal RNA. This chain is Small ribosomal subunit protein bS6, found in Chlorobium phaeovibrioides (strain DSM 265 / 1930) (Prosthecochloris vibrioformis (strain DSM 265)).